A 153-amino-acid polypeptide reads, in one-letter code: Large ribosomal subunit protein uL30 (153 aa).

Belongs to the universal ribosomal protein uL30 family. Part of the 50S ribosomal subunit.

The polypeptide is Large ribosomal subunit protein uL30 (Methanocella arvoryzae (strain DSM 22066 / NBRC 105507 / MRE50)).